The following is a 373-amino-acid chain: Probable G-protein coupled receptor 45 (373 aa).

Residues 1–38 lie on the Extracellular side of the membrane; sequence MACNSTPMGTYEHLLLNVSNTLDPGDTPLSAPLRISLA. An N-linked (GlcNAc...) asparagine glycan is attached at Asn-17. Residues 39 to 59 form a helical membrane-spanning segment; the sequence is IMMLLMIVVGFLGNTVVCIIV. The Cytoplasmic portion of the chain corresponds to 60–75; the sequence is YQRPAMRSAINLLLAT. A helical membrane pass occupies residues 76–96; it reads LAFSDIMLSLCCMPFTAITLI. Residues 97–109 lie on the Extracellular side of the membrane; sequence TVRWHFGDHFCRL. The helical transmembrane segment at 110–130 threads the bilayer; sequence SATLYWFFVLEGVAILLIISV. At 131 to 149 the chain is on the cytoplasmic side; it reads DRFLIIVQRQDKLNPRRAK. Residues 150 to 170 traverse the membrane as a helical segment; sequence MIIAASWVLSFCISAPSFTGW. The Extracellular segment spans residues 171 to 198; that stretch reads TFMEVPARAPQCVLGYTEFPAERAYVVT. The helical transmembrane segment at 199–219 threads the bilayer; the sequence is LVVAVFFAPFGVMLCSYLCIL. Topologically, residues 220-269 are cytoplasmic; the sequence is NTVRKNAVRVHNQSDSLDLRQLTGAGLRRLRRQQQQASLDLSFKTKAFTT. Residues 270–290 traverse the membrane as a helical segment; it reads ILILFVGFSLCWLPHSVYSLL. At 291–306 the chain is on the extracellular side; it reads SAFSRRFYYSASFYTT. A helical membrane pass occupies residues 307–327; the sequence is STCVLWLSYLKSVFNPIVYCW. Topologically, residues 328 to 373 are cytoplasmic; that stretch reads RIKKFREACIELLPHTFQILPKVPERIQRKIQPSTIYVCNENQSAV.

This sequence belongs to the G-protein coupled receptor 1 family. As to expression, brain specific.

The protein localises to the cell membrane. Its function is as follows. Orphan receptor. May play a role in brain function. The protein is Probable G-protein coupled receptor 45 (Gpr45) of Mus musculus (Mouse).